The following is a 342-amino-acid chain: Heat-inducible transcription repressor HrcA (342 aa).

Belongs to the HrcA family.

Its function is as follows. Negative regulator of class I heat shock genes (grpE-dnaK-dnaJ and groELS operons). Prevents heat-shock induction of these operons. In Dechloromonas aromatica (strain RCB), this protein is Heat-inducible transcription repressor HrcA.